The primary structure comprises 59 residues: Toxin TxpA (59 aa).

The helical transmembrane segment at 7 to 27 (LMVMIGFANLIGGIMTWVISL) threads the bilayer.

It localises to the cell membrane. Functionally, toxic component of a type I toxin-antitoxin (TA) system. Overexpression of txpA causes cell lysis; the TxpA protein has been suggested to act on the cell membrane or might possibly block cell wall synthesis. Overexpression in E.coli is not toxic. The polypeptide is Toxin TxpA (Bacillus subtilis (strain 168)).